The sequence spans 305 residues: MDQNNNTVSEFIMLGFTTDPVIQKVLFAVFLVVYTLTLMGNSSLIMLICNDSRLHTPMYFFIGNLSFLDLGLSSVYTPKILETCISEDKSISFAGCVAQFFFSAALDYTECYLLAAMAYDRYVAISKPLLYSQAMSLKLCVCFVVASYVGGFINSVIITKDTFALTFCNDNVIDDFFCDIPPLVKLACGKKKSFQSVLFFLLTSNVIIPIVFILATYLFIIATILRIRSTQGRLKAFSTCSSHLISVTLYYGSILYIYARPRSSYSLDRDKIVSTFYTVVFPMLNPLIYSLRNKDVKEALNKLLK.

Residues 1–24 (MDQNNNTVSEFIMLGFTTDPVIQK) lie on the Extracellular side of the membrane. The helical transmembrane segment at 25–45 (VLFAVFLVVYTLTLMGNSSLI) threads the bilayer. At 46 to 55 (MLICNDSRLH) the chain is on the cytoplasmic side. A helical membrane pass occupies residues 56-76 (TPMYFFIGNLSFLDLGLSSVY). Over 77 to 96 (TPKILETCISEDKSISFAGC) the chain is Extracellular. Residues cysteine 96 and cysteine 178 are joined by a disulfide bond. Residues 97–117 (VAQFFFSAALDYTECYLLAAM) form a helical membrane-spanning segment. The Cytoplasmic segment spans residues 118-138 (AYDRYVAISKPLLYSQAMSLK). Residues 139–159 (LCVCFVVASYVGGFINSVIIT) traverse the membrane as a helical segment. The Extracellular portion of the chain corresponds to 160-204 (KDTFALTFCNDNVIDDFFCDIPPLVKLACGKKKSFQSVLFFLLTS). A helical transmembrane segment spans residues 205-225 (NVIIPIVFILATYLFIIATIL). Topologically, residues 226–236 (RIRSTQGRLKA) are cytoplasmic. A helical transmembrane segment spans residues 237-257 (FSTCSSHLISVTLYYGSILYI). Residues 258 to 270 (YARPRSSYSLDRD) are Extracellular-facing. A helical membrane pass occupies residues 271-291 (KIVSTFYTVVFPMLNPLIYSL). Topologically, residues 292 to 305 (RNKDVKEALNKLLK) are cytoplasmic.

This sequence belongs to the G-protein coupled receptor 1 family.

Its subcellular location is the cell membrane. Its function is as follows. Odorant receptor. The protein is Olfactory receptor 9G19 of Mus musculus (Mouse).